Here is a 365-residue protein sequence, read N- to C-terminus: Probable dual-specificity RNA methyltransferase RlmN (365 aa).

Glu-111 serves as the catalytic Proton acceptor. The Radical SAM core domain maps to 117-351 (ADDRMTACIS…VNIRRSRGKD (235 aa)). Residues Cys-124 and Cys-356 are joined by a disulfide bond. The [4Fe-4S] cluster site is built by Cys-131, Cys-135, and Cys-138. S-adenosyl-L-methionine contacts are provided by residues 182–183 (GE), Ser-214, 237–239 (SLH), and Asn-313. The active-site S-methylcysteine intermediate is Cys-356.

Belongs to the radical SAM superfamily. RlmN family. It depends on [4Fe-4S] cluster as a cofactor.

The protein localises to the cytoplasm. It catalyses the reaction adenosine(2503) in 23S rRNA + 2 reduced [2Fe-2S]-[ferredoxin] + 2 S-adenosyl-L-methionine = 2-methyladenosine(2503) in 23S rRNA + 5'-deoxyadenosine + L-methionine + 2 oxidized [2Fe-2S]-[ferredoxin] + S-adenosyl-L-homocysteine. The catalysed reaction is adenosine(37) in tRNA + 2 reduced [2Fe-2S]-[ferredoxin] + 2 S-adenosyl-L-methionine = 2-methyladenosine(37) in tRNA + 5'-deoxyadenosine + L-methionine + 2 oxidized [2Fe-2S]-[ferredoxin] + S-adenosyl-L-homocysteine. Specifically methylates position 2 of adenine 2503 in 23S rRNA and position 2 of adenine 37 in tRNAs. The polypeptide is Probable dual-specificity RNA methyltransferase RlmN (Cytophaga hutchinsonii (strain ATCC 33406 / DSM 1761 / CIP 103989 / NBRC 15051 / NCIMB 9469 / D465)).